The sequence spans 232 residues: 7-cyano-7-deazaguanine synthase (232 aa).

8-18 contributes to the ATP binding site; it reads FSGGQDSTTCL. Residues cysteine 189, cysteine 198, cysteine 201, and cysteine 204 each contribute to the Zn(2+) site.

It belongs to the QueC family. Requires Zn(2+) as cofactor.

The enzyme catalyses 7-carboxy-7-deazaguanine + NH4(+) + ATP = 7-cyano-7-deazaguanine + ADP + phosphate + H2O + H(+). It participates in purine metabolism; 7-cyano-7-deazaguanine biosynthesis. Its function is as follows. Catalyzes the ATP-dependent conversion of 7-carboxy-7-deazaguanine (CDG) to 7-cyano-7-deazaguanine (preQ(0)). The protein is 7-cyano-7-deazaguanine synthase of Serratia proteamaculans (strain 568).